The following is a 560-amino-acid chain: Nuclear hormone receptor family member nhr-8 (560 aa).

The segment at 1 to 21 is disordered; that stretch reads MPSSSPSMDESRRSAVPPKEP. Residues 23–98 constitute a DNA-binding region (nuclear receptor); sequence GRICTVCSDR…VGMNSEWLND (76 aa). 2 NR C4-type zinc fingers span residues 26 to 46 and 62 to 86; these read CTVC…CESC and CPFS…LNKC. The NR LBD domain occupies 336-560; sequence DEITLLEELH…PLIRELCSFE (225 aa).

This sequence belongs to the nuclear hormone receptor family.

Its subcellular location is the nucleus. In terms of biological role, orphan nuclear receptor. This Caenorhabditis elegans protein is Nuclear hormone receptor family member nhr-8 (nhr-8).